The following is a 489-amino-acid chain: UDP-N-acetylmuramoyl-L-alanyl-D-glutamate--2,6-diaminopimelate ligase (489 aa).

UDP-N-acetyl-alpha-D-muramoyl-L-alanyl-D-glutamate is bound at residue Ser-34. 110–116 contributes to the ATP binding site; sequence GTAGKTS. UDP-N-acetyl-alpha-D-muramoyl-L-alanyl-D-glutamate is bound by residues 152–153, Ser-179, Gln-185, and Arg-187; that span reads TT. Lys-219 carries the N6-carboxylysine modification. Residues Arg-383, 407–410, Gly-455, and Glu-459 each bind meso-2,6-diaminopimelate; that span reads DNPR. Residues 407–410 carry the Meso-diaminopimelate recognition motif motif; the sequence is DNPR.

The protein belongs to the MurCDEF family. MurE subfamily. The cofactor is Mg(2+). Post-translationally, carboxylation is probably crucial for Mg(2+) binding and, consequently, for the gamma-phosphate positioning of ATP.

Its subcellular location is the cytoplasm. It carries out the reaction UDP-N-acetyl-alpha-D-muramoyl-L-alanyl-D-glutamate + meso-2,6-diaminopimelate + ATP = UDP-N-acetyl-alpha-D-muramoyl-L-alanyl-gamma-D-glutamyl-meso-2,6-diaminopimelate + ADP + phosphate + H(+). It participates in cell wall biogenesis; peptidoglycan biosynthesis. Its function is as follows. Catalyzes the addition of meso-diaminopimelic acid to the nucleotide precursor UDP-N-acetylmuramoyl-L-alanyl-D-glutamate (UMAG) in the biosynthesis of bacterial cell-wall peptidoglycan. The sequence is that of UDP-N-acetylmuramoyl-L-alanyl-D-glutamate--2,6-diaminopimelate ligase from Agrobacterium fabrum (strain C58 / ATCC 33970) (Agrobacterium tumefaciens (strain C58)).